Consider the following 395-residue polypeptide: S-adenosylmethionine synthase (395 aa).

An ATP-binding site is contributed by histidine 15. Aspartate 17 lines the Mg(2+) pocket. A K(+)-binding site is contributed by glutamate 43. L-methionine is bound by residues glutamate 56 and glutamine 99. The tract at residues 99-109 (QSPEIAQGVDR) is flexible loop. ATP is bound by residues 164–166 (DAK), 230–231 (RF), aspartate 239, 245–246 (RK), alanine 262, and lysine 266. Aspartate 239 is an L-methionine binding site. L-methionine is bound at residue lysine 270.

It belongs to the AdoMet synthase family. Homotetramer; dimer of dimers. It depends on Mg(2+) as a cofactor. Requires K(+) as cofactor.

The protein localises to the cytoplasm. The catalysed reaction is L-methionine + ATP + H2O = S-adenosyl-L-methionine + phosphate + diphosphate. Its pathway is amino-acid biosynthesis; S-adenosyl-L-methionine biosynthesis; S-adenosyl-L-methionine from L-methionine: step 1/1. Functionally, catalyzes the formation of S-adenosylmethionine (AdoMet) from methionine and ATP. The overall synthetic reaction is composed of two sequential steps, AdoMet formation and the subsequent tripolyphosphate hydrolysis which occurs prior to release of AdoMet from the enzyme. The polypeptide is S-adenosylmethionine synthase (Colwellia psychrerythraea (strain 34H / ATCC BAA-681) (Vibrio psychroerythus)).